We begin with the raw amino-acid sequence, 402 residues long: Ubiquitin-like modifier-activating enzyme 5 (402 aa).

5 residues coordinate ATP: G81, D102, K125, N148, and N182. Residues C224 and C227 each contribute to the Zn(2+) site. Catalysis depends on C248, which acts as the Glycyl thioester intermediate. The Zn(2+) site is built by C301 and C306. Positions 369–402 (EAPEKSSETSEETVTTAPPDDASLEDLMAQMKSM) are disordered.

It belongs to the ubiquitin-activating E1 family. UBA5 subfamily.

Its function is as follows. E1-like enzyme which activates UFM1. This Drosophila erecta (Fruit fly) protein is Ubiquitin-like modifier-activating enzyme 5.